We begin with the raw amino-acid sequence, 88 residues long: MKTVLIALLRFYKVAVSPMLGNRCRFYPSCSDYAREAIQYHGAARGTYLAVRRVCRCHPFSAGGVDLVPPPNSDTRARGEADARSHRL.

A disordered region spans residues 68 to 88 (VPPPNSDTRARGEADARSHRL). A compositionally biased stretch (basic and acidic residues) spans 75–88 (TRARGEADARSHRL).

This sequence belongs to the UPF0161 family.

It localises to the cell inner membrane. Functionally, could be involved in insertion of integral membrane proteins into the membrane. This is Putative membrane protein insertion efficiency factor from Burkholderia orbicola (strain MC0-3).